Reading from the N-terminus, the 224-residue chain is Urease accessory protein UreF (224 aa).

The protein belongs to the UreF family. As to quaternary structure, ureD, UreF and UreG form a complex that acts as a GTP-hydrolysis-dependent molecular chaperone, activating the urease apoprotein by helping to assemble the nickel containing metallocenter of UreC. The UreE protein probably delivers the nickel.

It localises to the cytoplasm. Functionally, required for maturation of urease via the functional incorporation of the urease nickel metallocenter. The chain is Urease accessory protein UreF from Azotobacter vinelandii (strain DJ / ATCC BAA-1303).